The primary structure comprises 79 residues: Cytochrome b (79 aa).

3 helical membrane passes run threonine 1 to alanine 7, tryptophan 31 to isoleucine 52, and tryptophan 67 to alanine 79. Heme b-binding residues include histidine 37 and histidine 51.

This sequence belongs to the cytochrome b family. In terms of assembly, the cytochrome bc1 complex contains 11 subunits: 3 respiratory subunits (MT-CYB, CYC1 and UQCRFS1), 2 core proteins (UQCRC1 and UQCRC2) and 6 low-molecular weight proteins (UQCRH/QCR6, UQCRB/QCR7, UQCRQ/QCR8, UQCR10/QCR9, UQCR11/QCR10 and a cleavage product of UQCRFS1). This cytochrome bc1 complex then forms a dimer. Heme b serves as cofactor.

The protein resides in the mitochondrion inner membrane. Its function is as follows. Component of the ubiquinol-cytochrome c reductase complex (complex III or cytochrome b-c1 complex) that is part of the mitochondrial respiratory chain. The b-c1 complex mediates electron transfer from ubiquinol to cytochrome c. Contributes to the generation of a proton gradient across the mitochondrial membrane that is then used for ATP synthesis. The polypeptide is Cytochrome b (MT-CYB) (Pomatostomus superciliosus (White-browed babbler)).